A 111-amino-acid polypeptide reads, in one-letter code: Large ribosomal subunit protein uL22 (111 aa).

It belongs to the universal ribosomal protein uL22 family. As to quaternary structure, part of the 50S ribosomal subunit.

This protein binds specifically to 23S rRNA; its binding is stimulated by other ribosomal proteins, e.g. L4, L17, and L20. It is important during the early stages of 50S assembly. It makes multiple contacts with different domains of the 23S rRNA in the assembled 50S subunit and ribosome. In terms of biological role, the globular domain of the protein is located near the polypeptide exit tunnel on the outside of the subunit, while an extended beta-hairpin is found that lines the wall of the exit tunnel in the center of the 70S ribosome. This chain is Large ribosomal subunit protein uL22, found in Chlamydia abortus (strain DSM 27085 / S26/3) (Chlamydophila abortus).